The primary structure comprises 488 residues: Glycogen synthase (488 aa).

Position 17 (lysine 17) interacts with ADP-alpha-D-glucose.

The protein belongs to the glycosyltransferase 1 family. Bacterial/plant glycogen synthase subfamily.

It carries out the reaction [(1-&gt;4)-alpha-D-glucosyl](n) + ADP-alpha-D-glucose = [(1-&gt;4)-alpha-D-glucosyl](n+1) + ADP + H(+). It functions in the pathway glycan biosynthesis; glycogen biosynthesis. In terms of biological role, synthesizes alpha-1,4-glucan chains using ADP-glucose. This Nitratidesulfovibrio vulgaris (strain DSM 19637 / Miyazaki F) (Desulfovibrio vulgaris) protein is Glycogen synthase.